A 214-amino-acid chain; its full sequence is Ribosomal RNA large subunit methyltransferase E (214 aa).

S-adenosyl-L-methionine-binding residues include Gly68, Trp70, Asp88, Asp104, and Asp129. Residue Lys169 is the Proton acceptor of the active site.

It belongs to the class I-like SAM-binding methyltransferase superfamily. RNA methyltransferase RlmE family.

It localises to the cytoplasm. The enzyme catalyses uridine(2552) in 23S rRNA + S-adenosyl-L-methionine = 2'-O-methyluridine(2552) in 23S rRNA + S-adenosyl-L-homocysteine + H(+). Its function is as follows. Specifically methylates the uridine in position 2552 of 23S rRNA at the 2'-O position of the ribose in the fully assembled 50S ribosomal subunit. The sequence is that of Ribosomal RNA large subunit methyltransferase E from Magnetococcus marinus (strain ATCC BAA-1437 / JCM 17883 / MC-1).